Reading from the N-terminus, the 380-residue chain is 3-dehydroquinate synthase (380 aa).

NAD(+) contacts are provided by residues 118–122 (GVIGD), 142–143 (TS), Lys-155, and Lys-164. Positions 197, 259, and 278 each coordinate Zn(2+).

This sequence belongs to the sugar phosphate cyclases superfamily. Dehydroquinate synthase family. Co(2+) serves as cofactor. The cofactor is Zn(2+). NAD(+) is required as a cofactor.

The protein localises to the cytoplasm. It catalyses the reaction 7-phospho-2-dehydro-3-deoxy-D-arabino-heptonate = 3-dehydroquinate + phosphate. The protein operates within metabolic intermediate biosynthesis; chorismate biosynthesis; chorismate from D-erythrose 4-phosphate and phosphoenolpyruvate: step 2/7. Functionally, catalyzes the conversion of 3-deoxy-D-arabino-heptulosonate 7-phosphate (DAHP) to dehydroquinate (DHQ). This chain is 3-dehydroquinate synthase, found in Sinorhizobium medicae (strain WSM419) (Ensifer medicae).